The sequence spans 72 residues: Seed trypsin/chymotrypsin inhibitor IVB (72 aa).

7 disulfides stabilise this stretch: Cys8-Cys61, Cys9-Cys24, Cys12-Cys57, Cys14-Cys22, Cys31-Cys38, Cys35-Cys50, and Cys40-Cys48.

It belongs to the Bowman-Birk serine protease inhibitor family. As to expression, seed.

Functionally, inhibitor of trypsin and of chymotrypsin. May function as a natural phytochemical defense against predators. The protein is Seed trypsin/chymotrypsin inhibitor IVB of Pisum sativum (Garden pea).